The primary structure comprises 562 residues: Dihydroxy-acid dehydratase (562 aa).

D80 provides a ligand contact to Mg(2+). C121 is a binding site for [2Fe-2S] cluster. Residues D122 and K123 each coordinate Mg(2+). At K123 the chain carries N6-carboxylysine. [2Fe-2S] cluster is bound at residue C194. A Mg(2+)-binding site is contributed by E446. The Proton acceptor role is filled by S472.

It belongs to the IlvD/Edd family. In terms of assembly, homodimer. [2Fe-2S] cluster serves as cofactor. Requires Mg(2+) as cofactor.

The enzyme catalyses (2R)-2,3-dihydroxy-3-methylbutanoate = 3-methyl-2-oxobutanoate + H2O. It carries out the reaction (2R,3R)-2,3-dihydroxy-3-methylpentanoate = (S)-3-methyl-2-oxopentanoate + H2O. The protein operates within amino-acid biosynthesis; L-isoleucine biosynthesis; L-isoleucine from 2-oxobutanoate: step 3/4. It participates in amino-acid biosynthesis; L-valine biosynthesis; L-valine from pyruvate: step 3/4. Functions in the biosynthesis of branched-chain amino acids. Catalyzes the dehydration of (2R,3R)-2,3-dihydroxy-3-methylpentanoate (2,3-dihydroxy-3-methylvalerate) into 2-oxo-3-methylpentanoate (2-oxo-3-methylvalerate) and of (2R)-2,3-dihydroxy-3-methylbutanoate (2,3-dihydroxyisovalerate) into 2-oxo-3-methylbutanoate (2-oxoisovalerate), the penultimate precursor to L-isoleucine and L-valine, respectively. The polypeptide is Dihydroxy-acid dehydratase (Staphylococcus aureus (strain bovine RF122 / ET3-1)).